The sequence spans 790 residues: Pre-mRNA-splicing factor cwf3 (790 aa).

HAT repeat units lie at residues 12-44, 45-77, 89-121, 123-157, 159-190, 193-228, 233-266, 268-303, 331-364, 368-402, 404-440, 457-492, 494-526, 528-562, 567-601, 639-673, and 675-709; these read DLIN…THEG, STLE…LRVA, EAFA…FLMK, PNVT…YAED, GGLF…KLGL, EAAR…LVVQ, TQNI…YYIR, GDYE…FEEQ, KILD…FLED, KVVQ…FYEN, DDLE…MELR, APRK…LEES, GTIE…LLEE, AYFE…KFVK, THME…FEEK, YGVL…METK, and GEID…FEIR. The tract at residues 769–790 is disordered; it reads LAGFVLSKSNPQETSKITGEEN. The segment covering 775–790 has biased composition (polar residues); sequence SKSNPQETSKITGEEN.

Belongs to the crooked-neck family. In terms of assembly, belongs to the 40S cdc5-associated complex (or cwf complex), a spliceosome sub-complex reminiscent of a late-stage spliceosome composed of the U2, U5 and U6 snRNAs and at least brr2, cdc5, cwf2/prp3, cwf3/syf1, cwf4/syf3, cwf5/ecm2, spp42/cwf6, cwf7/spf27, cwf8, cwf9, cwf10, cwf11, cwf12, prp45/cwf13, cwf14, cwf15, cwf16, cwf17, cwf18, cwf19, cwf20, cwf21, cwf22, cwf23, cwf24, cwf25, cwf26, cyp7/cwf27, cwf28, cwf29/ist3, lea1, msl1, prp5/cwf1, prp10, prp12/sap130, prp17, prp22, sap61, sap62, sap114, sap145, slu7, smb1, smd1, smd3, smf1, smg1 and syf2.

The protein localises to the nucleus. Its function is as follows. Involved in pre-mRNA splicing and cell cycle progression. The sequence is that of Pre-mRNA-splicing factor cwf3 (cwf3) from Schizosaccharomyces pombe (strain 972 / ATCC 24843) (Fission yeast).